The sequence spans 266 residues: Gasdermin bGSDM (266 aa).

4 beta stranded membrane-spanning segments follow: residues 67 to 83, 95 to 113, 162 to 179, and 187 to 203; these read LQQN…GVDI, KLRG…ISYQ, SFSV…DLEA, and ADVN…LMEY.

It belongs to the bacterial gasdermin family. Monomer. As to quaternary structure, forms large, homooligomeric ring-shaped pores when inserted in membranes.

The protein resides in the cytoplasm. It localises to the cell inner membrane. The full-length protein before cleavage is inactive: intramolecular interactions between the N-terminal domain and the C-terminal region mediate autoinhibition. The pyroptosis-like-inducing activity is carried by the released N-terminal domain (Gasdermin bGSDM, N-terminus). In terms of biological role, precursor of a pore-forming protein involved in defense against bacteriophages. Expression of bGSDM and the neighboring protease gene (Gilli_2517) is not toxic in E.coli. Cleavage of this precursor by its dedicated protease releases the active moiety (gasdermin bGSDM, N-terminus) which inserts into membranes, forming pores and triggering cell death. Functionally, pore-forming protein that causes membrane permeabilization via a pyroptosis-like activity. Makes ring-like pores when released. The sequence is that of Gasdermin bGSDM from Gillisia limnaea (strain DSM 15749 / LMG 21470 / R-8282).